Consider the following 328-residue polypeptide: Sulfate adenylyltransferase subunit 2 (328 aa).

Disordered regions lie at residues 15-34 (AAPDLADLGGEPARARPSSH) and 304-328 (SEREGRVIDRDSTASMERKKAEGYF).

It belongs to the PAPS reductase family. CysD subfamily. Heterodimer composed of CysD, the smaller subunit, and CysN.

The catalysed reaction is sulfate + ATP + H(+) = adenosine 5'-phosphosulfate + diphosphate. It functions in the pathway sulfur metabolism; hydrogen sulfide biosynthesis; sulfite from sulfate: step 1/3. Its function is as follows. With CysN forms the ATP sulfurylase (ATPS) that catalyzes the adenylation of sulfate producing adenosine 5'-phosphosulfate (APS) and diphosphate, the first enzymatic step in sulfur assimilation pathway. APS synthesis involves the formation of a high-energy phosphoric-sulfuric acid anhydride bond driven by GTP hydrolysis by CysN coupled to ATP hydrolysis by CysD. The chain is Sulfate adenylyltransferase subunit 2 from Rhodopseudomonas palustris (strain BisA53).